A 143-amino-acid polypeptide reads, in one-letter code: Large ribosomal subunit protein uL15 (143 aa).

The segment at 1-51 (MELNTIKPASGAKHAKRRVGRGIGSGLGKTAGRGHKGQKSRAGGYHKVGFE) is disordered. Residues 21–31 (RGIGSGLGKTA) show a composition bias toward gly residues.

Belongs to the universal ribosomal protein uL15 family. In terms of assembly, part of the 50S ribosomal subunit.

Functionally, binds to the 23S rRNA. This Methylibium petroleiphilum (strain ATCC BAA-1232 / LMG 22953 / PM1) protein is Large ribosomal subunit protein uL15.